The sequence spans 1244 residues: Alpha-protein kinase 1 (1244 aa).

Residues Phe-61, Gln-67, Arg-116, 150 to 153, Asp-231, Lys-233, 236 to 237, and Phe-295 contribute to the ADP-D-glycero-beta-D-manno-heptose site; these read RQAR and ST. Disordered regions lie at residues 650–675, 701–737, 757–798, and 824–848; these read LQEP…TPFS, VRNM…THPS, VKDR…TEDA, and NWPV…DPDA. A compositionally biased stretch (polar residues) spans 652 to 675; that stretch reads EPNNDNLEPSQNQPQQQMPLTPFS. Residues 713–726 show a composition bias toward low complexity; that stretch reads SRPSYRSASWSSDS. The span at 757–771 shows a compositional bias: basic and acidic residues; sequence VKDRQGKEQGEEISE. Residues 787-798 show a composition bias toward acidic residues; it reads PEGETAESTEDA. Residues 1017 to 1237 enclose the Alpha-type protein kinase domain; that stretch reads KYSKKSELWT…ICHRLSLTRP (221 aa).

It belongs to the protein kinase superfamily. Alpha-type protein kinase family. ALPK subfamily. Highly expressed in liver. Expressed in the optic nerve and retinal pigmented epithelium. Lower expression is observed in the macula and extramacular retina.

Its subcellular location is the cytoplasm. It localises to the cytosol. The protein localises to the cytoskeleton. The protein resides in the spindle pole. It is found in the microtubule organizing center. Its subcellular location is the centrosome. It localises to the cell projection. The protein localises to the cilium. The catalysed reaction is L-seryl-[protein] + ATP = O-phospho-L-seryl-[protein] + ADP + H(+). The enzyme catalyses L-threonyl-[protein] + ATP = O-phospho-L-threonyl-[protein] + ADP + H(+). Serine/threonine-protein kinase activity is stimulated upon ADP-D-glycero-beta-D-manno-heptose (ADP-Heptose)-binding. Serine/threonine-protein kinase that detects bacterial pathogen-associated molecular pattern metabolites (PAMPs) and initiates an innate immune response, a critical step for pathogen elimination and engagement of adaptive immunity. Specifically recognizes and binds ADP-D-glycero-beta-D-manno-heptose (ADP-Heptose), a potent PAMP present in all Gram-negative and some Gram-positive bacteria. ADP-Heptose-binding stimulates its kinase activity to phosphorylate and activate TIFA, triggering pro-inflammatory NF-kappa-B signaling. May be involved in monosodium urate monohydrate (MSU)-induced inflammation by mediating phosphorylation of unconventional myosin MYO9A. May also play a role in apical protein transport by mediating phosphorylation of unconventional myosin MYO1A. May play a role in ciliogenesis. The polypeptide is Alpha-protein kinase 1 (Homo sapiens (Human)).